A 171-amino-acid polypeptide reads, in one-letter code: Nicotinamide-nucleotide adenylyltransferase (171 aa).

It belongs to the archaeal NMN adenylyltransferase family.

It is found in the cytoplasm. It carries out the reaction beta-nicotinamide D-ribonucleotide + ATP + H(+) = diphosphate + NAD(+). Its pathway is cofactor biosynthesis; NAD(+) biosynthesis; NAD(+) from nicotinamide D-ribonucleotide: step 1/1. The protein is Nicotinamide-nucleotide adenylyltransferase of Methanococcus maripaludis (strain C6 / ATCC BAA-1332).